Here is a 704-residue protein sequence, read N- to C-terminus: Glycogen [starch] synthase, liver (704 aa).

Position 8 is a phosphoserine; by AMPK and PKA (serine 8). Serine 11 carries the post-translational modification Phosphoserine. A UDP-binding site is contributed by lysine 40. The UDP-alpha-D-glucose site is built by histidine 205 and arginine 211. Alpha-D-glucose 6-phosphate-binding residues include histidine 291, glutamate 292, glutamine 294, histidine 297, and lysine 301. Residue arginine 331 participates in UDP binding. Arginine 331 serves as a coordination point for UDP-alpha-D-glucose. Histidine 501 is a binding site for alpha-D-glucose 6-phosphate. Positions 510, 512, and 513 each coordinate UDP-alpha-D-glucose. Residue threonine 515 coordinates UDP. Positions 582 and 586 each coordinate alpha-D-glucose 6-phosphate. A disordered region spans residues 620–704 (KFHLEPTSPP…KKKLHGEYKN (85 aa)). Residue serine 627 is modified to Phosphoserine. 4 positions are modified to phosphoserine; by GSK3-alpha and GSK3-beta: serine 641, serine 645, serine 649, and serine 653. Low complexity predominate over residues 647–657 (SGSQASSPQCS). Residue serine 657 is modified to Phosphoserine; by CK2. A compositionally biased stretch (acidic residues) spans 658–675 (DAEDEEDEDERYDEEEEA). The residue at position 684 (serine 684) is a Phosphoserine.

The protein belongs to the glycosyltransferase 3 family. As to quaternary structure, part of the glycogen synthase (GS)-glycogenin complex, a heterooctamer composed of a tetramer of GS and 2 dimers of glycogenin, where each GS protomer binds to one glycogenin subunit (via glycogenin C-terminus); the GS tetramer may dissociate from glycogenin dimers to continue glycogen polymerization on its own. May also form a heterooctamer complex with GYG1 (via GYG1 C-terminus). Phosphorylation reduces the activity towards UDP-alpha-D-glucose. Primed phosphorylation at Ser-657 (site 5) by CSNK2A1 and CSNK2A2 is required for inhibitory phosphorylation at Ser-641 (site 3a), Ser-645 (site 3b), Ser-649 (site 3c) and Ser-653 (site 4) by GSK3A an GSK3B. Dephosphorylation at Ser-641 and Ser-645 by PP1 activates the enzyme. Phosphorylation at Ser-8 is not required for interaction with GYG1. Interaction with GYG1 does not regulate the phosphorylation at Ser-8 and Ser-641. In terms of tissue distribution, specifically expressed in liver.

It catalyses the reaction [(1-&gt;4)-alpha-D-glucosyl](n) + UDP-alpha-D-glucose = [(1-&gt;4)-alpha-D-glucosyl](n+1) + UDP + H(+). It functions in the pathway glycan biosynthesis; glycogen biosynthesis. With respect to regulation, allosteric activation by glucose-6-phosphate. Phosphorylation reduces the activity towards UDP-glucose. When in the non-phosphorylated state, glycogen synthase does not require glucose-6-phosphate as an allosteric activator; when phosphorylated it does. Its function is as follows. Glycogen synthase participates in the glycogen biosynthetic process along with glycogenin and glycogen branching enzyme. Extends the primer composed of a few glucose units formed by glycogenin by adding new glucose units to it. In this context, glycogen synthase transfers the glycosyl residue from UDP-Glc to the non-reducing end of alpha-1,4-glucan. This Mus musculus (Mouse) protein is Glycogen [starch] synthase, liver.